A 66-amino-acid chain; its full sequence is Large ribosomal subunit protein bL31 (66 aa).

Cys16, Cys18, Cys36, and Cys39 together coordinate Zn(2+).

The protein belongs to the bacterial ribosomal protein bL31 family. Type A subfamily. In terms of assembly, part of the 50S ribosomal subunit. It depends on Zn(2+) as a cofactor.

Its function is as follows. Binds the 23S rRNA. This Nautilia profundicola (strain ATCC BAA-1463 / DSM 18972 / AmH) protein is Large ribosomal subunit protein bL31.